We begin with the raw amino-acid sequence, 313 residues long: Ribosomal RNA small subunit methyltransferase H (313 aa).

S-adenosyl-L-methionine contacts are provided by residues 35-37, aspartate 55, phenylalanine 79, aspartate 100, and glutamine 107; that span reads GGH.

It belongs to the methyltransferase superfamily. RsmH family.

The protein resides in the cytoplasm. It carries out the reaction cytidine(1402) in 16S rRNA + S-adenosyl-L-methionine = N(4)-methylcytidine(1402) in 16S rRNA + S-adenosyl-L-homocysteine + H(+). Specifically methylates the N4 position of cytidine in position 1402 (C1402) of 16S rRNA. The sequence is that of Ribosomal RNA small subunit methyltransferase H from Burkholderia vietnamiensis (strain G4 / LMG 22486) (Burkholderia cepacia (strain R1808)).